The primary structure comprises 622 residues: Auxin efflux carrier component 1 (622 aa).

The Extracellular segment spans residues 1-6; sequence MITAAD. The chain crosses the membrane as a helical span at residues 7–27; that stretch reads FYHVMTAMVPLYVAMILAYGS. The Cytoplasmic segment spans residues 28–44; that stretch reads VKWWKIFTPDQCSGINR. The helical transmembrane segment at 45-65 threads the bilayer; sequence FVALFAVPLLSFHFIAANNPY. Valine 51 provides a ligand contact to (indol-3-yl)acetate. Residues 66 to 70 lie on the Extracellular side of the membrane; it reads AMNLR. A helical transmembrane segment spans residues 71 to 91; the sequence is FLAADSLQKVIVLSLLFLWCK. At 92 to 100 the chain is on the cytoplasmic side; the sequence is LSRNGSLDW. Residues 101–121 form a helical membrane-spanning segment; it reads TITLFSLSTLPNTLVMGIPLL. (indol-3-yl)acetate contacts are provided by asparagine 112 and leucine 114. Over 122–131 the chain is Extracellular; sequence KGMYGNFSGD. N-linked (GlcNAc...) asparagine glycosylation occurs at asparagine 127. A helical transmembrane segment spans residues 132-152; it reads LMVQIVVLQCIIWYTLMLFLF. Residue tyrosine 145 coordinates (indol-3-yl)acetate. Over 153–482 the chain is Cytoplasmic; sequence EYRGAKLLIS…LIRNPNSYSS (330 aa). 4 positions are modified to phosphoserine: serine 209, serine 212, serine 221, and serine 225. The disordered stretch occupies residues 213–233; that stretch reads RSDIYSRRSQGLSATPRPSNL. Threonine 227 bears the Phosphothreonine mark. Serine 231 carries the post-translational modification Phosphoserine. Threonine 248 is modified (phosphothreonine). Phosphoserine is present on residues serine 252, serine 253, and serine 271. The interval 268 to 362 is disordered; it reads GRNSNFGPGE…PVVGGKRQDG (95 aa). Threonine 286 is subject to Phosphothreonine. At serine 290 the chain carries Phosphoserine. Residues 298 to 311 are compositionally biased toward low complexity; it reads PAKPTAAGTAAGAG. Threonine 302 is modified (phosphothreonine). Serine 317, serine 320, and serine 337 each carry phosphoserine. Threonine 340 is modified (phosphothreonine). Residues serine 374, serine 377, serine 408, serine 414, serine 426, serine 434, and serine 446 each carry the phosphoserine modification. The chain crosses the membrane as a helical span at residues 483–503; the sequence is LFGITWSLISFKWNIEMPALI. At 504-506 the chain is on the extracellular side; the sequence is AKS. The helical transmembrane segment at 507-527 threads the bilayer; the sequence is ISILSDAGLGMAMFSLGLFMA. At 528 to 541 the chain is on the cytoplasmic side; it reads LNPRIIACGNRRAA. Residues 542-562 traverse the membrane as a helical segment; the sequence is FAAAMRFVVGPAVMLVASYAV. Residues 563–566 are Extracellular-facing; it reads GLRG. The helical transmembrane segment at 567 to 587 threads the bilayer; sequence VLLHVAIIQAALPQGIVPFVF. (indol-3-yl)acetate is bound by residues isoleucine 582 and valine 583. At 588 to 601 the chain is on the cytoplasmic side; that stretch reads AKEYNVHPDILSTA. The chain crosses the membrane as a helical span at residues 602–622; that stretch reads VIFGMLIALPITLLYYILLGL.

The protein belongs to the auxin efflux carrier (TC 2.A.69.1) family. As to quaternary structure, homodimer. Interacts with TOPP4. Interacts with FYPP1 and FYPP3. Component of a complex made of PINs (e.g. PIN1 and PIN2), MAB4/MELs (e.g. NPY1/MAB4 and NPY5/MEL1) and AGC kinases (e.g. D6PK and PID) at the plasma membrane. Binds directly to NPY5/MEL1. As to expression, expressed at the basal side of elongated parenchymatous xylem cells.

It is found in the cell membrane. Its activity is regulated as follows. Auxin efflux carrier activity is competitively inhibited by naptalamate (N-1-naphthylphthalamic acid, NPA) but activated by D6PK-mediated phosphorylation. Functionally, acts as a component of the auxin efflux carrier; this activity is enhanced when activated by D6PK-mediated phosphorylation. Binds auxins including indole-3-acetic acid (IAA), indole-3-butyric acid (IBA), indole-3-propionic acid (IPA) and 4-chloroindole-3-acetic acid (4-Cl-IAA). Seems to be involved in the basipetal auxin transport. Mediates the formation of auxin gradient which is required to ensure correct organogenesis. Coordinated polar localization of PIN1 is directly regulated by the vesicle trafficking process and apical-basal PIN1 polarity also depends on the phosphorylation of conserved serine residues by PID kinase. The ARF-GEF protein GNOM is required for the correct recycling of PIN1 between the plasma membrane and endosomal compartments. Recrutes NPY proteins (e.g. NPY1/MAB4 and NPY5/MEL1) to the plasma membrane in a polar basal localization in root epidermis; this activity is optimized by AGC kinases-mediated (e.g. D6PK and PID) phosphorylation that limits their lateral diffusion-based escape. The chain is Auxin efflux carrier component 1 from Arabidopsis thaliana (Mouse-ear cress).